The chain runs to 118 residues: BLOC-1-related complex subunit 8 (118 aa).

Residues 98 to 107 (KEQISNSQGR) are compositionally biased toward polar residues. The disordered stretch occupies residues 98–118 (KEQISNSQGRSPHVSAPSASS).

This sequence belongs to the BORCS8 family.

The protein resides in the lysosome membrane. As part of a BORC-like complex, it may play a role in the movement and localization of lysosomes at the cell periphery. Associated with the cytosolic face of lysosomes, this complex may couple lysosomes to microtubule plus-end-directed kinesin motors, driving lysosome movement toward the cell periphery. This Tetraodon nigroviridis (Spotted green pufferfish) protein is BLOC-1-related complex subunit 8.